We begin with the raw amino-acid sequence, 461 residues long: Deoxyguanosinetriphosphate triphosphohydrolase-like protein (461 aa).

The interval 22-41 (ERFLPDPPREKDNRPPFRRD) is disordered. A compositionally biased stretch (basic and acidic residues) spans 24–41 (FLPDPPREKDNRPPFRRD). The HD domain occupies 72–285 (RLTHSLEVAQ…MELADDIAYG (214 aa)).

Belongs to the dGTPase family. Type 2 subfamily.

This chain is Deoxyguanosinetriphosphate triphosphohydrolase-like protein, found in Haemophilus influenzae (strain PittEE).